We begin with the raw amino-acid sequence, 161 residues long: Zinc finger A20 and AN1 domain-containing stress-associated protein 9 (161 aa).

The segment at Pro17–Thr51 adopts an A20-type zinc-finger fold. Residues Cys23, Cys27, Cys39, and Cys42 each contribute to the Zn(2+) site. The segment at Phe62 to Ser99 is disordered. A compositionally biased stretch (basic and acidic residues) spans Ala75–Ala90. An AN1-type zinc finger spans residues Lys96–Gly142. The Zn(2+) site is built by Cys102, Cys105, Cys116, Cys118, Cys123, His126, His132, and Cys134.

May be involved in environmental stress response. In Oryza sativa subsp. japonica (Rice), this protein is Zinc finger A20 and AN1 domain-containing stress-associated protein 9 (SAP9).